Here is a 317-residue protein sequence, read N- to C-terminus: Methionyl-tRNA formyltransferase (317 aa).

(6S)-5,6,7,8-tetrahydrofolate is bound at residue serine 112–proline 115.

The protein belongs to the Fmt family.

The enzyme catalyses L-methionyl-tRNA(fMet) + (6R)-10-formyltetrahydrofolate = N-formyl-L-methionyl-tRNA(fMet) + (6S)-5,6,7,8-tetrahydrofolate + H(+). Its function is as follows. Attaches a formyl group to the free amino group of methionyl-tRNA(fMet). The formyl group appears to play a dual role in the initiator identity of N-formylmethionyl-tRNA by promoting its recognition by IF2 and preventing the misappropriation of this tRNA by the elongation apparatus. The sequence is that of Methionyl-tRNA formyltransferase from Mycoplasma mycoides subsp. mycoides SC (strain CCUG 32753 / NCTC 10114 / PG1).